Here is a 190-residue protein sequence, read N- to C-terminus: Imidazoleglycerol-phosphate dehydratase (190 aa).

Belongs to the imidazoleglycerol-phosphate dehydratase family.

The protein localises to the cytoplasm. It carries out the reaction D-erythro-1-(imidazol-4-yl)glycerol 3-phosphate = 3-(imidazol-4-yl)-2-oxopropyl phosphate + H2O. It functions in the pathway amino-acid biosynthesis; L-histidine biosynthesis; L-histidine from 5-phospho-alpha-D-ribose 1-diphosphate: step 6/9. This Campylobacter hominis (strain ATCC BAA-381 / DSM 21671 / CCUG 45161 / LMG 19568 / NCTC 13146 / CH001A) protein is Imidazoleglycerol-phosphate dehydratase.